Reading from the N-terminus, the 460-residue chain is Cysteine--tRNA ligase (460 aa).

Zn(2+) is bound at residue cysteine 27. The 'HIGH' region motif lies at 29-39; sequence PTVYDDAHLGH. Residues cysteine 202, histidine 227, and glutamate 231 each contribute to the Zn(2+) site. Positions 259 to 263 match the 'KMSKS' region motif; that stretch reads KMSKS. Lysine 262 is an ATP binding site.

The protein belongs to the class-I aminoacyl-tRNA synthetase family. As to quaternary structure, monomer. Zn(2+) is required as a cofactor.

Its subcellular location is the cytoplasm. The catalysed reaction is tRNA(Cys) + L-cysteine + ATP = L-cysteinyl-tRNA(Cys) + AMP + diphosphate. This is Cysteine--tRNA ligase from Campylobacter lari (strain RM2100 / D67 / ATCC BAA-1060).